The chain runs to 277 residues: UPF0276 protein PP_0992 (277 aa).

Belongs to the UPF0276 family.

This is UPF0276 protein PP_0992 from Pseudomonas putida (strain ATCC 47054 / DSM 6125 / CFBP 8728 / NCIMB 11950 / KT2440).